A 230-amino-acid chain; its full sequence is RING finger protein 141 (230 aa).

An RING-type zinc finger spans residues E154 to C191.

In Gallus gallus (Chicken), this protein is RING finger protein 141 (RNF141).